The sequence spans 55 residues: Spermatid nuclear transition protein 1 (55 aa).

Positions 1-42 (MSTSRKLKTHGMRRGKNRAPHKGVKRGGSKRKYRKSSLKSRK) are enriched in basic residues. A disordered region spans residues 1-55 (MSTSRKLKTHGMRRGKNRAPHKGVKRGGSKRKYRKSSLKSRKRGDDASRNYRSHL). Phosphoserine occurs at positions 36, 37, and 40.

This sequence belongs to the nuclear transition protein 1 family. As to expression, testis.

It is found in the nucleus. The protein resides in the chromosome. In terms of biological role, plays a key role in the replacement of histones to protamine in the elongating spermatids of mammals. In condensing spermatids, loaded onto the nucleosomes, where it promotes the recruitment and processing of protamines, which are responsible for histone eviction. The sequence is that of Spermatid nuclear transition protein 1 (Tnp1) from Rattus norvegicus (Rat).